We begin with the raw amino-acid sequence, 76 residues long: Translation initiation factor IF-1 (76 aa).

Residues 1-76 (MEDMAKKDGV…TRGRIVYRYK (76 aa)) form the S1-like domain.

This sequence belongs to the IF-1 family. In terms of assembly, component of the 30S ribosomal translation pre-initiation complex which assembles on the 30S ribosome in the order IF-2 and IF-3, IF-1 and N-formylmethionyl-tRNA(fMet); mRNA recruitment can occur at any time during PIC assembly.

The protein resides in the cytoplasm. In terms of biological role, one of the essential components for the initiation of protein synthesis. Stabilizes the binding of IF-2 and IF-3 on the 30S subunit to which N-formylmethionyl-tRNA(fMet) subsequently binds. Helps modulate mRNA selection, yielding the 30S pre-initiation complex (PIC). Upon addition of the 50S ribosomal subunit IF-1, IF-2 and IF-3 are released leaving the mature 70S translation initiation complex. The chain is Translation initiation factor IF-1 from Renibacterium salmoninarum (strain ATCC 33209 / DSM 20767 / JCM 11484 / NBRC 15589 / NCIMB 2235).